The sequence spans 331 residues: Glyceraldehyde-3-phosphate dehydrogenase (331 aa).

NAD(+) is bound by residues 12-13 (RI), D34, R78, and T120. N6-acetyllysine is present on residues K132 and K138. Residues 149–151 (SCT) and T180 contribute to the D-glyceraldehyde 3-phosphate site. The active-site Nucleophile is the C150. K192 bears the N6-acetyllysine mark. D-glyceraldehyde 3-phosphate-binding positions include 209 to 210 (TG) and R232. N6-acetyllysine is present on K249. N314 contributes to the NAD(+) binding site.

Belongs to the glyceraldehyde-3-phosphate dehydrogenase family. Homotetramer.

It is found in the cytoplasm. The enzyme catalyses D-glyceraldehyde 3-phosphate + phosphate + NAD(+) = (2R)-3-phospho-glyceroyl phosphate + NADH + H(+). It participates in carbohydrate degradation; glycolysis; pyruvate from D-glyceraldehyde 3-phosphate: step 1/5. Catalyzes the oxidative phosphorylation of glyceraldehyde 3-phosphate (G3P) to 1,3-bisphosphoglycerate (BPG) using the cofactor NAD. The first reaction step involves the formation of a hemiacetal intermediate between G3P and a cysteine residue, and this hemiacetal intermediate is then oxidized to a thioester, with concomitant reduction of NAD to NADH. The reduced NADH is then exchanged with the second NAD, and the thioester is attacked by a nucleophilic inorganic phosphate to produce BPG. The sequence is that of Glyceraldehyde-3-phosphate dehydrogenase (gapA) from Escherichia coli O6:H1 (strain CFT073 / ATCC 700928 / UPEC).